The chain runs to 383 residues: MSNHWLLPENIADVLPSEARKIEELRRRMLDLFRTYGYELVMPPMLEYLESLLTGTGHDLDLRTLKLVDQLSGRTMGLRADITPQVARIDAHLLNRPGVTRLCYAGNVLHARPAGFHATREPIQIGAEIYGHAGLEADIEIQDLMLAALQAAGLSDVRIDMCHAGILEALLAGLPSIRKIEDALFAALETKDVPALRELTVGMPQTERDALLALPTLYGGVDVIDRARATLPASPAIGRALDELAALAVQVRGASVNIDLSDLRGYHYHSGVMFAAYVAGLPNYVARGGRYDKVGEAFGRARPATGFSLDLREVAALSPVEVRAQAIFAPWDADPALRAAISALRAAGEIVIQSLPGHTHELDEFNCDRQLVRQDAGWAVVPR.

It belongs to the class-II aminoacyl-tRNA synthetase family. HisZ subfamily. In terms of assembly, heteromultimer composed of HisG and HisZ subunits.

Its subcellular location is the cytoplasm. It participates in amino-acid biosynthesis; L-histidine biosynthesis; L-histidine from 5-phospho-alpha-D-ribose 1-diphosphate: step 1/9. Required for the first step of histidine biosynthesis. May allow the feedback regulation of ATP phosphoribosyltransferase activity by histidine. This Cupriavidus necator (strain ATCC 17699 / DSM 428 / KCTC 22496 / NCIMB 10442 / H16 / Stanier 337) (Ralstonia eutropha) protein is ATP phosphoribosyltransferase regulatory subunit.